The sequence spans 305 residues: Aquaporin-1 (305 aa).

The interval 1–34 (MSSNDSNDTDKQHTRLDPTGVDDAYIPPEQPETK) is disordered. At 1-48 (MSSNDSNDTDKQHTRLDPTGVDDAYIPPEQPETKHHRFKISKDTLRNH) the chain is on the cytoplasmic side. The chain crosses the membrane as a helical span at residues 49–69 (FIAAAGEFCGTFMFLWCAYVI). The Extracellular segment spans residues 70 to 91 (CNVANHDVALVAAPDGSHPGQL). The chain crosses the membrane as a helical span at residues 92-112 (IMIAIGFGFSVMFSIWCFAGV). Topologically, residues 113 to 136 (SGGALNPAMSLSLCLARAVSPTRC) are cytoplasmic. The short motif at 118–120 (NPA) is the NPA 1 element. A helical membrane pass occupies residues 137-157 (VVMWVSQIVAGMAAGGAASAM). The Extracellular segment spans residues 158–176 (TPGEVLFANSLGLGCSRTR). The helical transmembrane segment at 177 to 197 (GLFLEMFGTAILCLTVLMTAV) threads the bilayer. Over 198–203 (EKRETN) the chain is Cytoplasmic. Residues 204-224 (FMAALPIGISLFIAHVALTAY) form a helical membrane-spanning segment. Residues 225–248 (TGTGVNPARSLGAAVAARYFPHYH) are Extracellular-facing. Positions 230 to 232 (NPA) match the NPA 2 motif. A helical membrane pass occupies residues 249–269 (WIYWIGTLLGSILAWSVWQLL). Residues 270-305 (QILDYTTYVTAEKAASTKEKAQKKGETSSSSAVAEV) lie on the Cytoplasmic side of the membrane. A compositionally biased stretch (basic and acidic residues) spans 286-295 (TKEKAQKKGE). The tract at residues 286–305 (TKEKAQKKGETSSSSAVAEV) is disordered. Positions 296-305 (TSSSSAVAEV) are enriched in polar residues.

This sequence belongs to the MIP/aquaporin (TC 1.A.8) family.

It is found in the endoplasmic reticulum membrane. Its subcellular location is the cell membrane. In terms of biological role, water channel required to facilitate the transport of water across membranes. Involved in sporulation, freeze tolerance and osmotolerance. Is non-functional in most laboratory strains. The polypeptide is Aquaporin-1 (AQY1) (Saccharomyces cerevisiae (strain YJM789) (Baker's yeast)).